We begin with the raw amino-acid sequence, 311 residues long: Aspartate carbamoyltransferase catalytic subunit (311 aa).

Arginine 58 and threonine 59 together coordinate carbamoyl phosphate. Lysine 86 contacts L-aspartate. Positions 108, 136, and 139 each coordinate carbamoyl phosphate. The L-aspartate site is built by arginine 169 and arginine 223. Carbamoyl phosphate contacts are provided by glycine 264 and proline 265.

This sequence belongs to the aspartate/ornithine carbamoyltransferase superfamily. ATCase family. As to quaternary structure, heterododecamer (2C3:3R2) of six catalytic PyrB chains organized as two trimers (C3), and six regulatory PyrI chains organized as three dimers (R2).

The enzyme catalyses carbamoyl phosphate + L-aspartate = N-carbamoyl-L-aspartate + phosphate + H(+). The protein operates within pyrimidine metabolism; UMP biosynthesis via de novo pathway; (S)-dihydroorotate from bicarbonate: step 2/3. Its function is as follows. Catalyzes the condensation of carbamoyl phosphate and aspartate to form carbamoyl aspartate and inorganic phosphate, the committed step in the de novo pyrimidine nucleotide biosynthesis pathway. The chain is Aspartate carbamoyltransferase catalytic subunit from Desulfosudis oleivorans (strain DSM 6200 / JCM 39069 / Hxd3) (Desulfococcus oleovorans).